Consider the following 530-residue polypeptide: Membrane-associated transporter protein (530 aa).

Over 1–45 (MSGSNGPTDTHTYQSLAEDCPFGSVEQPKRSTGRLVMHSMAMFGR) the chain is Cytoplasmic. The helical transmembrane segment at 46-66 (EFCYAVEAAYVTPVLLSVGLP) threads the bilayer. Residues 67–68 (KS) lie on the Extracellular side of the membrane. Residues 69 to 89 (LYSMVWLLSPILGFLLQPVVG) traverse the membrane as a helical segment. The Cytoplasmic segment spans residues 90-105 (SASDHCRARWGRRRPY). Residues 106 to 126 (ILTLAIMMLLGMALYLNGDAV) traverse the membrane as a helical segment. The Extracellular segment spans residues 127–138 (VSALVANPRQKL). The chain crosses the membrane as a helical span at residues 139–159 (IWAISITMVGVVLFDFSADFI). The Cytoplasmic segment spans residues 160-184 (DGPIKAYLFDVCSHQDKEKGLHYHA). A helical membrane pass occupies residues 185-205 (LFTGFGGALGYILGAIDWVHL). Topologically, residues 206–216 (DLGRLLGTEFQ) are extracellular. A helical membrane pass occupies residues 217–237 (VMFFFSALVLILCFITHLCSI). Residues 238 to 318 (PEAPLRDAAT…ALVNMPSHYR (81 aa)) lie on the Cytoplasmic side of the membrane. Residues 275-299 (KNGGADTEQPVQEWKNKKPSGQSQR) form a disordered region. A helical transmembrane segment spans residues 319–339 (CLCVSHLIGWTAFLSNMLFFT). The Extracellular portion of the chain corresponds to 340–366 (DFMGQIVYHGDPYGAHNSTEFLIYERG). Asparagine 356 carries an N-linked (GlcNAc...) asparagine glycan. The helical transmembrane segment at 367–387 (VEVGCWGLCINSVFSSVYSYF) threads the bilayer. The Cytoplasmic portion of the chain corresponds to 388-398 (QKAMVSYIGLK). The helical transmembrane segment at 399–419 (GLYFMGYLLFGLGTGFIGLFP) threads the bilayer. At 420–425 (NVYSTL) the chain is on the extracellular side. Residues 426–446 (VLCSMFGVMSSTLYTVPFNLI) traverse the membrane as a helical segment. The Cytoplasmic segment spans residues 447–477 (AEYHREEEKEKGQEAPGGPDNQGRGKGVDCA). The helical transmembrane segment at 478–498 (ALTCMVQLAQILVGGGLGFLV) threads the bilayer. The Extracellular portion of the chain corresponds to 499–504 (NMAGSV). Residues 505–525 (VVVVITASAVSLIGCCFVALF) traverse the membrane as a helical segment. Over 526 to 530 (VRYVD) the chain is Cytoplasmic.

The protein belongs to the glycoside-pentoside-hexuronide (GPH) cation symporter transporter (TC 2.A.2) family. As to quaternary structure, interacts with TYRP1. Mainly expressed in eyeballs and skin melanocytes. Also detected in kidney, colon, gall bladder and pancreas.

The protein resides in the melanosome membrane. It carries out the reaction sucrose(out) + H(+)(out) = sucrose(in) + H(+)(in). It catalyses the reaction D-glucose(out) + H(+)(out) = D-glucose(in) + H(+)(in). Its function is as follows. Proton-associated glucose and sucrose transporter. May be able to transport also fructose. Expressed at a late melanosome maturation stage where functions as a proton/glucose exporter which increase lumenal pH by decreasing glycolysis. Regulates melanogenesis by maintaining melanosome neutralization that is initially initiated by transient OCA2 and required for a proper function of the tyrosinase TYR. The protein is Membrane-associated transporter protein (Slc45a2) of Mus musculus (Mouse).